A 258-amino-acid polypeptide reads, in one-letter code: tRNA pseudouridine synthase A (258 aa).

The Nucleophile role is filled by D52. A substrate-binding site is contributed by Y110.

Belongs to the tRNA pseudouridine synthase TruA family. In terms of assembly, homodimer.

The enzyme catalyses uridine(38/39/40) in tRNA = pseudouridine(38/39/40) in tRNA. Its function is as follows. Formation of pseudouridine at positions 38, 39 and 40 in the anticodon stem and loop of transfer RNAs. The sequence is that of tRNA pseudouridine synthase A from Francisella philomiragia subsp. philomiragia (strain ATCC 25017 / CCUG 19701 / FSC 153 / O#319-036).